A 264-amino-acid polypeptide reads, in one-letter code: 3-methyl-2-oxobutanoate hydroxymethyltransferase (264 aa).

The Mg(2+) site is built by Asp45 and Asp84. 3-methyl-2-oxobutanoate contacts are provided by residues 45-46, Asp84, and Lys112; that span reads DS. Residue Glu114 participates in Mg(2+) binding. Glu181 (proton acceptor) is an active-site residue.

Belongs to the PanB family. Homodecamer; pentamer of dimers. Mg(2+) serves as cofactor.

It localises to the cytoplasm. The enzyme catalyses 3-methyl-2-oxobutanoate + (6R)-5,10-methylene-5,6,7,8-tetrahydrofolate + H2O = 2-dehydropantoate + (6S)-5,6,7,8-tetrahydrofolate. It functions in the pathway cofactor biosynthesis; (R)-pantothenate biosynthesis; (R)-pantoate from 3-methyl-2-oxobutanoate: step 1/2. Functionally, catalyzes the reversible reaction in which hydroxymethyl group from 5,10-methylenetetrahydrofolate is transferred onto alpha-ketoisovalerate to form ketopantoate. The sequence is that of 3-methyl-2-oxobutanoate hydroxymethyltransferase from Shewanella oneidensis (strain ATCC 700550 / JCM 31522 / CIP 106686 / LMG 19005 / NCIMB 14063 / MR-1).